A 312-amino-acid polypeptide reads, in one-letter code: NAD(P)(+)--arginine ADP-ribosyltransferase 1 (312 aa).

Residues 1–20 (MELLALRWVLLAGTLLSTSA) form the signal peptide. Residues 21 to 31 (ASSALQEGDLG) constitute a propeptide that is removed on maturation. Intrachain disulfides connect C51-C260 and C159-C208. In terms of domain architecture, TR mART core spans 71-256 (IAYAVTWRQA…IQLHSKGKMS (186 aa)). 3 residues coordinate NAD(+): Y108, R164, and Q183. R164 is a catalytic residue. S186 is a catalytic residue. S217 lines the NAD(+) pocket. E224 is an active-site residue. Positions 267 to 312 (GGQWGRGHQEVGLGLSPGLSLPVLPCRRRVWEGLGHREGDPIPAAV) are excised as a propeptide.

It belongs to the Arg-specific ADP-ribosyltransferase family.

It localises to the secreted. The protein localises to the extracellular space. It catalyses the reaction L-arginyl-[protein] + NAD(+) = N(omega)-(ADP-D-ribosyl)-L-arginyl-[protein] + nicotinamide + H(+). This is NAD(P)(+)--arginine ADP-ribosyltransferase 1 from Gallus gallus (Chicken).